A 94-amino-acid polypeptide reads, in one-letter code: Co-chaperonin GroES (94 aa).

Belongs to the GroES chaperonin family. Heptamer of 7 subunits arranged in a ring. Interacts with the chaperonin GroEL.

The protein localises to the cytoplasm. Together with the chaperonin GroEL, plays an essential role in assisting protein folding. The GroEL-GroES system forms a nano-cage that allows encapsulation of the non-native substrate proteins and provides a physical environment optimized to promote and accelerate protein folding. GroES binds to the apical surface of the GroEL ring, thereby capping the opening of the GroEL channel. This Lactobacillus helveticus (strain DPC 4571) protein is Co-chaperonin GroES.